Here is a 138-residue protein sequence, read N- to C-terminus: Transcription antitermination protein NusB (138 aa).

Belongs to the NusB family.

Functionally, involved in transcription antitermination. Required for transcription of ribosomal RNA (rRNA) genes. Binds specifically to the boxA antiterminator sequence of the ribosomal RNA (rrn) operons. This is Transcription antitermination protein NusB from Yersinia enterocolitica serotype O:8 / biotype 1B (strain NCTC 13174 / 8081).